The chain runs to 234 residues: Probable plastid-lipid-associated protein 5, chloroplastic (234 aa).

The N-terminal 45 residues, 1 to 45, are a transit peptide targeting the chloroplast; the sequence is MALPWCLKTGVLTSPAAGFNHPSDSGFAVPTKLLSIRKGDRERLR.

It belongs to the PAP/fibrillin family.

The protein localises to the plastid. It localises to the chloroplast thylakoid. The protein is Probable plastid-lipid-associated protein 5, chloroplastic (PAP5) of Arabidopsis thaliana (Mouse-ear cress).